The primary structure comprises 200 residues: ATP-dependent Clp protease proteolytic subunit (200 aa).

Ser-103 serves as the catalytic Nucleophile. The active site involves His-128.

The protein belongs to the peptidase S14 family. As to quaternary structure, fourteen ClpP subunits assemble into 2 heptameric rings which stack back to back to give a disk-like structure with a central cavity, resembling the structure of eukaryotic proteasomes.

It is found in the cytoplasm. It carries out the reaction Hydrolysis of proteins to small peptides in the presence of ATP and magnesium. alpha-casein is the usual test substrate. In the absence of ATP, only oligopeptides shorter than five residues are hydrolyzed (such as succinyl-Leu-Tyr-|-NHMec, and Leu-Tyr-Leu-|-Tyr-Trp, in which cleavage of the -Tyr-|-Leu- and -Tyr-|-Trp bonds also occurs).. Functionally, cleaves peptides in various proteins in a process that requires ATP hydrolysis. Has a chymotrypsin-like activity. Plays a major role in the degradation of misfolded proteins. This Vibrio parahaemolyticus serotype O3:K6 (strain RIMD 2210633) protein is ATP-dependent Clp protease proteolytic subunit.